Here is a 674-residue protein sequence, read N- to C-terminus: tRNA wybutosine-synthesizing protein 4 (674 aa).

Residues Arg-84, Gly-109, Asp-140, 184 to 185, and Glu-212 each bind S-adenosyl-L-methionine; that span reads DL.

Belongs to the methyltransferase superfamily. LCMT family.

It carries out the reaction 7-[(3S)-3-amino-3-carboxypropyl]wyosine(37) in tRNA(Phe) + S-adenosyl-L-methionine = 7-[(3S)-(3-amino-3-methoxycarbonyl)propyl]wyosine(37) in tRNA(Phe) + S-adenosyl-L-homocysteine. It catalyses the reaction 7-[(3S)-(3-amino-3-methoxycarbonyl)propyl]wyosine(37) in tRNA(Phe) + S-adenosyl-L-methionine + CO2 = wybutosine(37) in tRNA(Phe) + S-adenosyl-L-homocysteine + 2 H(+). It functions in the pathway tRNA modification; wybutosine-tRNA(Phe) biosynthesis. Functionally, probable S-adenosyl-L-methionine-dependent methyltransferase that acts as a component of the wybutosine biosynthesis pathway. Wybutosine is a hyper modified guanosine with a tricyclic base found at the 3'-position adjacent to the anticodon of eukaryotic phenylalanine tRNA. May methylate the carboxyl group of leucine residues to form alpha-leucine ester residues. The protein is tRNA wybutosine-synthesizing protein 4 (PPM2) of Candida glabrata (strain ATCC 2001 / BCRC 20586 / JCM 3761 / NBRC 0622 / NRRL Y-65 / CBS 138) (Yeast).